A 379-amino-acid chain; its full sequence is Flagellin A (379 aa).

Coiled coils occupy residues 103–128 and 302–341; these read TNSASERQALDEESTALQDELNRIAE and YVDSQRAELGAKQNRLSHSINNLANIQENVEASNSRIKDT.

Belongs to the bacterial flagellin family. Heteromer of multiple flagellin subunits including FlaA, FlaB, FlaC, FlaD and possibly FlaE.

Its subcellular location is the secreted. The protein localises to the bacterial flagellum. Flagellin is the subunit protein which polymerizes to form the filaments of bacterial flagella. FlaA is essential for flagellar synthesis and full motility. Important for virulence at two different levels: is needed for crossing the fish integument and may play a role once the bacterium has entered the host. The protein is Flagellin A (flaA) of Vibrio anguillarum (Listonella anguillarum).